The primary structure comprises 531 residues: Zinc finger protein 692 (531 aa).

Over residues Glu-155–Ser-178 the composition is skewed to basic and acidic residues. Disordered stretches follow at residues Glu-155–Leu-249 and Met-287–Asp-307. A compositionally biased stretch (acidic residues) spans Leu-186 to Leu-206. Ser-231 is modified (phosphoserine). Residues Ser-290–Asn-303 are compositionally biased toward polar residues. 5 C2H2-type zinc fingers span residues Met-327–His-352, Phe-358–His-382, Tyr-388–His-410, Leu-416–His-438, and Phe-447–His-470. Ser-469 is modified (phosphoserine). Residues Leu-474–Ser-531 form a disordered region. Residues Leu-483–Glu-499 are compositionally biased toward polar residues. A compositionally biased stretch (low complexity) spans Ser-502–Pro-520.

Belongs to the krueppel C2H2-type zinc-finger protein family. In terms of processing, phosphorylation at Ser-469 results in loss of DNA-binding activity.

The protein localises to the nucleus. May act as an transcriptional repressor for PCK1 gene expression, in turn may participate in the hepatic gluconeogenesis regulation through the activated AMPK signaling pathway. The protein is Zinc finger protein 692 of Mus musculus (Mouse).